The chain runs to 270 residues: Tetraspanin-14 (270 aa).

Residues 1 to 17 are Cytoplasmic-facing; the sequence is MHYYRYSNAKVSCWYKY. The helical transmembrane segment at 18 to 38 threads the bilayer; the sequence is LLFSYNIIFWLAGVVFLGVGL. Topologically, residues 39-61 are extracellular; that stretch reads WAWSEKGVLSDLTKVTRMHGIDP. The chain crosses the membrane as a helical span at residues 62 to 82; the sequence is VVLVLMVGVVMFTLGFAGCVG. Residues 83–92 lie on the Cytoplasmic side of the membrane; that stretch reads ALRENICLLN. Residues 93 to 113 form a helical membrane-spanning segment; the sequence is FFCGTIVLIFFLELAVAVLAF. Residues 114–232 are Extracellular-facing; it reads LFQDWVRDRF…QALESWLPRN (119 aa). The interval 114–232 is necessary and sufficient for interaction with ADAM10; sequence LFQDWVRDRF…QALESWLPRN (119 aa). 4 disulfides stabilise this stretch: Cys153–Cys221, Cys154–Cys186, Cys170–Cys180, and Cys187–Cys200. Asn169 carries N-linked (GlcNAc...) asparagine glycosylation. The helical transmembrane segment at 233–253 threads the bilayer; the sequence is IYIVAGVFIAISLLQIFGIFL. The Cytoplasmic segment spans residues 254–270; it reads ARTLISDIEAVKAGHHF.

Belongs to the tetraspanin (TM4SF) family. Interacts with ADAM10; the interaction promotes ADAM10 maturation and cell surface expression.

It is found in the cell membrane. In terms of biological role, part of TspanC8 subgroup, composed of 6 members that interact with the transmembrane metalloprotease ADAM10. This interaction is required for ADAM10 exit from the endoplasmic reticulum and for enzymatic maturation and trafficking to the cell surface as well as substrate specificity. Different TspanC8/ADAM10 complexes have distinct substrates. Negatively regulates ADAM10-mediated cleavage of GP6. Promotes ADAM10-mediated cleavage of CDH5. The chain is Tetraspanin-14 from Homo sapiens (Human).